Here is a 775-residue protein sequence, read N- to C-terminus: N6-adenosine-methyltransferase non-catalytic subunit MTB (775 aa).

The segment covering 1–10 has biased composition (basic and acidic residues); sequence MKKKQEESSL. Disordered regions lie at residues 1–424 and 520–569; these read MKKK…GAIP and DRGG…EQND. The segment covering 40–49 has biased composition (low complexity); sequence FESSSRSGGS. Basic and acidic residues-rich tracts occupy residues 50 to 79, 100 to 117, 125 to 222, 229 to 278, and 333 to 344; these read KSKEDNKSVVDVEHQDRDSKRERDGRERTH, DGDHKSSKLSDSRHDSGG, EHGE…LKDN, SSGD…RGEA, and EWAHNQEGRQRS. The span at 375 to 400 shows a compositional bias: polar residues; it reads QRGSTPGRTNFVQTPNRGYQTPQGTR.

This sequence belongs to the MT-A70-like family. Forms homodimers. Interacts with HAKAI, MTA and VIR. Associates with MTA, FIP37, VIR and HAKAI to form the m6A writer complex which is essential for adenosine methylation at specific mRNA sequences.

It is found in the nucleus speckle. The protein resides in the nucleus. The protein localises to the nucleoplasm. Its function is as follows. Probable non-catalytic subunit of the N6-methyltransferase complex, a multiprotein complex that mediates N6-methyladenosine (m6A) methylation at the 5'-[AG]GAC-3' consensus sites of some mRNAs. Associates with MTA, FIP37, VIR and HAKAI to form the m6A writer complex which is essential for adenosine methylation at specific mRNA sequences. N6-methyladenosine (m6A) plays a role in mRNA stability, processing, translation efficiency and editing. The chain is N6-adenosine-methyltransferase non-catalytic subunit MTB from Arabidopsis thaliana (Mouse-ear cress).